The following is a 316-amino-acid chain: Pyridoxal 5'-phosphate synthase subunit PdxS (316 aa).

D44 lines the D-ribose 5-phosphate pocket. Residue K101 is the Schiff-base intermediate with D-ribose 5-phosphate of the active site. Residue G173 participates in D-ribose 5-phosphate binding. A D-glyceraldehyde 3-phosphate-binding site is contributed by K185. D-ribose 5-phosphate is bound by residues G234 and 255–256 (GS).

It belongs to the PdxS/SNZ family. In the presence of PdxT, forms a dodecamer of heterodimers.

It carries out the reaction aldehydo-D-ribose 5-phosphate + D-glyceraldehyde 3-phosphate + L-glutamine = pyridoxal 5'-phosphate + L-glutamate + phosphate + 3 H2O + H(+). The protein operates within cofactor biosynthesis; pyridoxal 5'-phosphate biosynthesis. Functionally, catalyzes the formation of pyridoxal 5'-phosphate from ribose 5-phosphate (RBP), glyceraldehyde 3-phosphate (G3P) and ammonia. The ammonia is provided by the PdxT subunit. Can also use ribulose 5-phosphate and dihydroxyacetone phosphate as substrates, resulting from enzyme-catalyzed isomerization of RBP and G3P, respectively. The polypeptide is Pyridoxal 5'-phosphate synthase subunit PdxS (Sulfurisphaera tokodaii (strain DSM 16993 / JCM 10545 / NBRC 100140 / 7) (Sulfolobus tokodaii)).